Reading from the N-terminus, the 495-residue chain is GTPase Der (495 aa).

2 consecutive EngA-type G domains span residues proline 3–glutamate 166 and isoleucine 208–threonine 381. GTP is bound by residues glycine 9–serine 16, aspartate 56–isoleucine 60, asparagine 118–aspartate 121, glycine 214–serine 221, aspartate 261–valine 265, and asparagine 326–aspartate 329. The KH-like domain occupies arginine 382–glutamate 466.

This sequence belongs to the TRAFAC class TrmE-Era-EngA-EngB-Septin-like GTPase superfamily. EngA (Der) GTPase family. As to quaternary structure, associates with the 50S ribosomal subunit.

GTPase that plays an essential role in the late steps of ribosome biogenesis. The protein is GTPase Der of Pectobacterium carotovorum subsp. carotovorum (strain PC1).